A 258-amino-acid chain; its full sequence is Deoxyribose-phosphate aldolase (258 aa).

The Proton donor/acceptor role is filled by Asp-101. Lys-166 acts as the Schiff-base intermediate with acetaldehyde in catalysis. Lys-200 acts as the Proton donor/acceptor in catalysis.

It belongs to the DeoC/FbaB aldolase family. DeoC type 2 subfamily.

The protein localises to the cytoplasm. The enzyme catalyses 2-deoxy-D-ribose 5-phosphate = D-glyceraldehyde 3-phosphate + acetaldehyde. Its pathway is carbohydrate degradation; 2-deoxy-D-ribose 1-phosphate degradation; D-glyceraldehyde 3-phosphate and acetaldehyde from 2-deoxy-alpha-D-ribose 1-phosphate: step 2/2. In terms of biological role, catalyzes a reversible aldol reaction between acetaldehyde and D-glyceraldehyde 3-phosphate to generate 2-deoxy-D-ribose 5-phosphate. The protein is Deoxyribose-phosphate aldolase of Actinobacillus pleuropneumoniae serotype 5b (strain L20).